We begin with the raw amino-acid sequence, 85 residues long: Large ribosomal subunit protein bL27 (85 aa).

Residues methionine 1–leucine 21 form a disordered region.

The protein belongs to the bacterial ribosomal protein bL27 family.

In Pseudomonas putida (strain W619), this protein is Large ribosomal subunit protein bL27.